Reading from the N-terminus, the 481-residue chain is Glutamate--tRNA ligase (481 aa).

The short motif at 9-19 (PSPTGNLHIGT) is the 'HIGH' region element. The 'KMSKS' region motif lies at 247–251 (KLSKR). Lys250 serves as a coordination point for ATP.

It belongs to the class-I aminoacyl-tRNA synthetase family. Glutamate--tRNA ligase type 1 subfamily. In terms of assembly, monomer.

Its subcellular location is the cytoplasm. It catalyses the reaction tRNA(Glu) + L-glutamate + ATP = L-glutamyl-tRNA(Glu) + AMP + diphosphate. Functionally, catalyzes the attachment of glutamate to tRNA(Glu) in a two-step reaction: glutamate is first activated by ATP to form Glu-AMP and then transferred to the acceptor end of tRNA(Glu). In Trichormus variabilis (strain ATCC 29413 / PCC 7937) (Anabaena variabilis), this protein is Glutamate--tRNA ligase.